A 310-amino-acid polypeptide reads, in one-letter code: p-hydroxybenzoic acid efflux pump subunit AaeA (310 aa).

The helical transmembrane segment at 12–32 (AITLVLVILAFIAIFRAWVYY) threads the bilayer.

Belongs to the membrane fusion protein (MFP) (TC 8.A.1) family.

It localises to the cell inner membrane. In terms of biological role, forms an efflux pump with AaeB. This Salmonella arizonae (strain ATCC BAA-731 / CDC346-86 / RSK2980) protein is p-hydroxybenzoic acid efflux pump subunit AaeA.